A 354-amino-acid polypeptide reads, in one-letter code: Muscleblind-like protein 3 (354 aa).

C3H1-type zinc fingers lie at residues 14–42, 48–74, 174–202, and 210–236; these read WLTLEVCREFQRGTCSRADADCKFAHPPR, NGRVVACFDSLKGRCTRENCKYLHPPP, SDKLEVCREFQRGNCTRGENDCRYAHPTD, and DNTVTICMDYIKGRCSREKCKYFHPPA.

The protein belongs to the muscleblind family. In terms of tissue distribution, highly expressed in the placenta.

It is found in the nucleus. The protein localises to the cytoplasm. In terms of biological role, mediates pre-mRNA alternative splicing regulation. Acts either as activator or repressor of splicing on specific pre-mRNA targets. Inhibits cardiac troponin-T (TNNT2) pre-mRNA exon inclusion but induces insulin receptor (IR) pre-mRNA exon inclusion in muscle. Antagonizes the alternative splicing activity pattern of CELF proteins. May play a role in myotonic dystrophy pathophysiology (DM). Could inhibit terminal muscle differentiation, acting at approximately the time of myogenin induction. The polypeptide is Muscleblind-like protein 3 (MBNL3) (Homo sapiens (Human)).